We begin with the raw amino-acid sequence, 221 residues long: Stromal cell-derived factor 2-like protein 1 (221 aa).

The first 28 residues, 1 to 28 (MWGASRGRVAGPTLLGLLLALSVRSGGA), serve as a signal peptide directing secretion. 3 MIR domains span residues 33–87 (AGLV…IRGG), 95–150 (GLPV…VRCS), and 151–205 (GQHW…AMEG). Ser-215 carries the post-translational modification Phosphoserine. The Prevents secretion from ER signature appears at 218-221 (HDEL).

Ubiquitously expressed with high expression in the testis, ovary, uterus, and low expression in heart and skeletal muscle.

The protein localises to the endoplasmic reticulum lumen. The polypeptide is Stromal cell-derived factor 2-like protein 1 (Sdf2l1) (Mus musculus (Mouse)).